Reading from the N-terminus, the 351-residue chain is Nicotinate-nucleotide--dimethylbenzimidazole phosphoribosyltransferase (351 aa).

The active-site Proton acceptor is the Glu-317.

It belongs to the CobT family.

The catalysed reaction is 5,6-dimethylbenzimidazole + nicotinate beta-D-ribonucleotide = alpha-ribazole 5'-phosphate + nicotinate + H(+). Its pathway is nucleoside biosynthesis; alpha-ribazole biosynthesis; alpha-ribazole from 5,6-dimethylbenzimidazole: step 1/2. Catalyzes the synthesis of alpha-ribazole-5'-phosphate from nicotinate mononucleotide (NAMN) and 5,6-dimethylbenzimidazole (DMB). This chain is Nicotinate-nucleotide--dimethylbenzimidazole phosphoribosyltransferase, found in Pseudomonas aeruginosa (strain UCBPP-PA14).